The sequence spans 31 residues: MLTITSYFGFLLAALTITSALFIGLSKIRLI.

Residues 4-24 form a helical membrane-spanning segment; that stretch reads ITSYFGFLLAALTITSALFIG.

It belongs to the PetL family. In terms of assembly, the 4 large subunits of the cytochrome b6-f complex are cytochrome b6, subunit IV (17 kDa polypeptide, PetD), cytochrome f and the Rieske protein, while the 4 small subunits are PetG, PetL, PetM and PetN. The complex functions as a dimer.

The protein localises to the plastid. It is found in the chloroplast thylakoid membrane. Component of the cytochrome b6-f complex, which mediates electron transfer between photosystem II (PSII) and photosystem I (PSI), cyclic electron flow around PSI, and state transitions. PetL is important for photoautotrophic growth as well as for electron transfer efficiency and stability of the cytochrome b6-f complex. The polypeptide is Cytochrome b6-f complex subunit 6 (Hamamelis virginiana (Witch-hazel)).